The primary structure comprises 199 residues: MKVGAEVRRRGNREDGRQVMARLKKTVVMVGMMGAGKTAVGSALARGLNVPFLDSDEEIERAANRTIAEIFARDGEPFFREKESQVLARLLRGSPCVLSTGGGAFMAEGNRRMIREQGVSVWLKADLDVLWHRVRHKATRPLLRTPNPRETLRALLEARDPVYAQADLAVESGEGTVEQMAVRVREALATRPDVLETDE.

Gly34–Ala39 lines the ATP pocket. Residue Thr38 coordinates Mg(2+). Residues Asp56, Arg80, and Gly102 each contribute to the substrate site. Arg140 contacts ATP. Arg159 contacts substrate.

Belongs to the shikimate kinase family. In terms of assembly, monomer. Mg(2+) is required as a cofactor.

It is found in the cytoplasm. It carries out the reaction shikimate + ATP = 3-phosphoshikimate + ADP + H(+). The protein operates within metabolic intermediate biosynthesis; chorismate biosynthesis; chorismate from D-erythrose 4-phosphate and phosphoenolpyruvate: step 5/7. In terms of biological role, catalyzes the specific phosphorylation of the 3-hydroxyl group of shikimic acid using ATP as a cosubstrate. This chain is Shikimate kinase, found in Cereibacter sphaeroides (strain ATCC 17023 / DSM 158 / JCM 6121 / CCUG 31486 / LMG 2827 / NBRC 12203 / NCIMB 8253 / ATH 2.4.1.) (Rhodobacter sphaeroides).